Reading from the N-terminus, the 309-residue chain is tRNA-dihydrouridine(16) synthase (309 aa).

FMN is bound by residues 7 to 9 and Gln68; that span reads PME. Catalysis depends on Cys98, which acts as the Proton donor. Residues Arg137, Asn198, and 220–221 contribute to the FMN site; that span reads GC.

Belongs to the Dus family. DusC subfamily. The cofactor is FMN.

It carries out the reaction 5,6-dihydrouridine(16) in tRNA + NADP(+) = uridine(16) in tRNA + NADPH + H(+). It catalyses the reaction 5,6-dihydrouridine(16) in tRNA + NAD(+) = uridine(16) in tRNA + NADH + H(+). In terms of biological role, catalyzes the synthesis of 5,6-dihydrouridine (D), a modified base found in the D-loop of most tRNAs, via the reduction of the C5-C6 double bond in target uridines. Specifically modifies U16 in tRNAs. This Azotobacter vinelandii protein is tRNA-dihydrouridine(16) synthase.